The sequence spans 466 residues: Ribulose bisphosphate carboxylase large chain (466 aa).

Residue Lys4 is modified to N6,N6,N6-trimethyllysine. Substrate-binding residues include Asn113 and Thr163. The active-site Proton acceptor is the Lys165. Lys167 contacts substrate. Mg(2+) contacts are provided by Lys191, Asp193, and Glu194. Position 191 is an N6-carboxylysine (Lys191). His284 (proton acceptor) is an active-site residue. Substrate-binding residues include Arg285, His317, and Ser369.

This sequence belongs to the RuBisCO large chain family. Type I subfamily. As to quaternary structure, heterohexadecamer of 8 large chains and 8 small chains; disulfide-linked. The disulfide link is formed within the large subunit homodimers. Mg(2+) is required as a cofactor. The disulfide bond which can form in the large chain dimeric partners within the hexadecamer appears to be associated with oxidative stress and protein turnover.

It localises to the plastid. The protein localises to the chloroplast. It catalyses the reaction 2 (2R)-3-phosphoglycerate + 2 H(+) = D-ribulose 1,5-bisphosphate + CO2 + H2O. The enzyme catalyses D-ribulose 1,5-bisphosphate + O2 = 2-phosphoglycolate + (2R)-3-phosphoglycerate + 2 H(+). RuBisCO catalyzes two reactions: the carboxylation of D-ribulose 1,5-bisphosphate, the primary event in carbon dioxide fixation, as well as the oxidative fragmentation of the pentose substrate in the photorespiration process. Both reactions occur simultaneously and in competition at the same active site. The polypeptide is Ribulose bisphosphate carboxylase large chain (Pinguicula caerulea (Blueflower butterwort)).